We begin with the raw amino-acid sequence, 156 residues long: Cytochrome c-type biogenesis protein CcmE 1 (156 aa).

The Cytoplasmic portion of the chain corresponds to 1–8 (MNATRKQR). The helical; Signal-anchor for type II membrane protein transmembrane segment at 9–29 (LWLVIGVLAAAALAVTLIVFA) threads the bilayer. At 30 to 156 (LQRNMSYLFT…ATVAPLTAPR (127 aa)) the chain is on the periplasmic side. Histidine 123 and tyrosine 127 together coordinate heme.

Belongs to the CcmE/CycJ family.

Its subcellular location is the cell inner membrane. In terms of biological role, heme chaperone required for the biogenesis of c-type cytochromes. Transiently binds heme delivered by CcmC and transfers the heme to apo-cytochromes in a process facilitated by CcmF and CcmH. This is Cytochrome c-type biogenesis protein CcmE 1 from Xanthomonas axonopodis pv. citri (strain 306).